The sequence spans 617 residues: ATP-dependent zinc metalloprotease FtsH (617 aa).

The Cytoplasmic segment spans residues 1 to 7 (MKIPFDR). The chain crosses the membrane as a helical span at residues 8–28 (WLGWPTLLLLLLGLWLLGSSL). The Periplasmic segment spans residues 29 to 102 (RDQRTVEAVP…VSYRRVRESN (74 aa)). A helical membrane pass occupies residues 103-123 (WLSQLLSWMAGPLLLLGFWYF). Over 124 to 617 (MSRRIDGQQG…GRPAAIRQVA (494 aa)) the chain is Cytoplasmic. An ATP-binding site is contributed by 198–205 (GPTGTGKT). His-421 is a binding site for Zn(2+). The active site involves Glu-422. Zn(2+) contacts are provided by His-425 and Asp-498.

It in the central section; belongs to the AAA ATPase family. In the C-terminal section; belongs to the peptidase M41 family. As to quaternary structure, homohexamer. Zn(2+) serves as cofactor.

It localises to the cell inner membrane. Acts as a processive, ATP-dependent zinc metallopeptidase for both cytoplasmic and membrane proteins. Plays a role in the quality control of integral membrane proteins. This chain is ATP-dependent zinc metalloprotease FtsH, found in Methylibium petroleiphilum (strain ATCC BAA-1232 / LMG 22953 / PM1).